We begin with the raw amino-acid sequence, 572 residues long: Zyxin (572 aa).

Position 2 is an N-acetylalanine (alanine 2). Residues 23-351 (QKKFGPVVAP…VRSPGAPGPL (329 aa)) form a disordered region. Pro residues-rich tracts occupy residues 63–78 (IPPPPPEDFPLPPPPL) and 93–108 (FPPPPPPIEESFPPAP). Phosphoserine is present on residues serine 116, serine 142, serine 143, serine 169, and serine 170. Residues 143–156 (SIDLEIDSLSSLLD) are compositionally biased toward low complexity. Residue threonine 179 is modified to Phosphothreonine. Low complexity predominate over residues 202 to 239 (SPSSSQPLPQVPAPAQSQTQFHVQPQPQPKPQVQLHVQ). A compositionally biased stretch (polar residues) spans 240 to 252 (SQTQPVSLANTQP). Arginine 253 carries the post-translational modification Asymmetric dimethylarginine. Positions 253 to 265 (RGPPASSPAPAPK) are enriched in pro residues. The residue at position 259 (serine 259) is a Phosphoserine. Position 265 is an N6-acetyllysine (lysine 265). Serine 267 is modified (phosphoserine). Residue threonine 270 is modified to Phosphothreonine. Lysine 272 bears the N6-acetyllysine mark. Position 274 is a phosphothreonine (threonine 274). Residue lysine 279 is modified to N6-acetyllysine. A phosphoserine mark is found at serine 281, serine 288, and serine 308. The segment covering 305 to 318 (GTGSPQPPSFTYAQ) has biased composition (polar residues). A compositionally biased stretch (basic and acidic residues) spans 319–330 (QREKPRVQEKQH). Serine 344 is subject to Phosphoserine. LIM zinc-binding domains follow at residues 384 to 443 (CGRC…TLEK), 444 to 503 (CNTC…YAPR), and 504 to 570 (CSVC…TARA).

This sequence belongs to the zyxin/ajuba family. As to quaternary structure, interacts with HPV type 6 protein E6. Does not interact significantly with E6 proteins from HPV types 11, 16, or 18. Interacts, via the Pro-rich regions, with the EVH1 domains of ENAH, EVL and VASP. Interacts with the first LIM domain of TES. Interacts with NEBL (isoform 2). Interacts with SYNPO2. (Microbial infection) Interacts with human papillomavirus type 6/HPV6 protein E6. Does not interact significantly with E6 proteins from HPV types 11, 16, or 18.

The protein resides in the cytoplasm. Its subcellular location is the cytoskeleton. The protein localises to the nucleus. It is found in the cell junction. It localises to the focal adhesion. Functionally, adhesion plaque protein. Binds alpha-actinin and the CRP protein. Important for targeting TES and ENA/VASP family members to focal adhesions and for the formation of actin-rich structures. May be a component of a signal transduction pathway that mediates adhesion-stimulated changes in gene expression. This is Zyxin (ZYX) from Homo sapiens (Human).